The primary structure comprises 63 residues: UPF0370 protein ECA1289 (63 aa).

A helical transmembrane segment spans residues Trp3–Ile23. The segment at Pro39–Pro63 is disordered.

Belongs to the UPF0370 family.

It is found in the cell membrane. The polypeptide is UPF0370 protein ECA1289 (Pectobacterium atrosepticum (strain SCRI 1043 / ATCC BAA-672) (Erwinia carotovora subsp. atroseptica)).